A 142-amino-acid chain; its full sequence is Truncated non-functional hemagglutinin-esterase homolog (142 aa).

Residues 1-117 (MNFTVPVQAI…ESVDVISSSY (117 aa)) are Virion surface-facing. A glycan (N-linked (GlcNAc...) asparagine; by host) is linked at Asn-2. Cys-28 and Cys-33 are joined by a disulfide. 2 N-linked (GlcNAc...) asparagine; by host glycosylation sites follow: Asn-46 and Asn-67. An intrachain disulfide couples Cys-70 to Cys-95. A helical transmembrane segment spans residues 118–138 (FVATWVLLVVVIILVFIIISF). At 139–142 (CISN) the chain is on the intravirion side.

The protein belongs to the influenza type C/coronaviruses hemagglutinin-esterase family. As to quaternary structure, homodimer. Post-translationally, N-glycosylated.

The protein resides in the virion membrane. It localises to the host cell membrane. This chain is Truncated non-functional hemagglutinin-esterase homolog (HE), found in Berne virus (BEV).